The chain runs to 52 residues: ATP synthase protein 8 (52 aa).

A helical membrane pass occupies residues 6-26 (PINGFVILCSISLMLLTLLIN).

Belongs to the ATPase protein 8 family. As to quaternary structure, F-type ATPases have 2 components, CF(1) - the catalytic core - and CF(0) - the membrane proton channel.

Its subcellular location is the mitochondrion membrane. Functionally, mitochondrial membrane ATP synthase (F(1)F(0) ATP synthase or Complex V) produces ATP from ADP in the presence of a proton gradient across the membrane which is generated by electron transport complexes of the respiratory chain. F-type ATPases consist of two structural domains, F(1) - containing the extramembraneous catalytic core and F(0) - containing the membrane proton channel, linked together by a central stalk and a peripheral stalk. During catalysis, ATP synthesis in the catalytic domain of F(1) is coupled via a rotary mechanism of the central stalk subunits to proton translocation. Part of the complex F(0) domain. Minor subunit located with subunit a in the membrane. This is ATP synthase protein 8 (MT-ATP8) from Albinaria turrita (Door snail).